A 603-amino-acid polypeptide reads, in one-letter code: Myotubularin (603 aa).

Residues 1 to 13 (MASASTSKYNSHS) show a composition bias toward polar residues. Residues 1-25 (MASASTSKYNSHSLENESIKRTSRD) form a disordered region. Phosphoserine is present on residues serine 13 and serine 18. Basic and acidic residues predominate over residues 14 to 25 (LENESIKRTSRD). Residues 29–97 (RDLTEAVPRL…GVISRIEKMG (69 aa)) form the GRAM domain. The 376-residue stretch at 163 to 538 (GWTVYNPVEE…RHLELWVNYY (376 aa)) folds into the Myotubularin phosphatase domain. The a 1,2-diacyl-sn-glycero-3-phospho-(1D-myo-inositol-3,5-bisphosphate) site is built by asparagine 288, asparagine 313, and isoleucine 314. Residues asparagine 288, asparagine 313, and isoleucine 314 each contribute to the a 1,2-diacyl-sn-glycero-3-phospho-(1D-myo-inositol-3-phosphate) site. Residue cysteine 375 is the Phosphocysteine intermediate of the active site. A 1,2-diacyl-sn-glycero-3-phospho-(1D-myo-inositol-3,5-bisphosphate) is bound by residues serine 376, aspartate 377, glycine 378, tryptophan 379, aspartate 380, arginine 381, lysine 417, and arginine 421. A 1,2-diacyl-sn-glycero-3-phospho-(1D-myo-inositol-3-phosphate) contacts are provided by serine 376, aspartate 377, glycine 378, tryptophan 379, aspartate 380, and arginine 381. Residue arginine 421 participates in a 1,2-diacyl-sn-glycero-3-phospho-(1D-myo-inositol-3-phosphate) binding. Threonine 495 is subject to Phosphothreonine. The segment at 579–603 (SAKLSDPPTSPSSPSQMMPHVQTHF) is disordered. At serine 588 the chain carries Phosphoserine.

The protein belongs to the protein-tyrosine phosphatase family. Non-receptor class myotubularin subfamily. In terms of assembly, heterodimer with MTMR12. Interacts with KMT2A/MLL1 (via SET domain). Interacts with DES in skeletal muscle but not in cardiac muscle. Interacts with SPEG.

The protein resides in the cytoplasm. It is found in the cell membrane. Its subcellular location is the cell projection. The protein localises to the filopodium. It localises to the ruffle. The protein resides in the late endosome. It is found in the myofibril. Its subcellular location is the sarcomere. It catalyses the reaction a 1,2-diacyl-sn-glycero-3-phospho-(1D-myo-inositol-3-phosphate) + H2O = a 1,2-diacyl-sn-glycero-3-phospho-(1D-myo-inositol) + phosphate. The catalysed reaction is a 1,2-diacyl-sn-glycero-3-phospho-(1D-myo-inositol-3,5-bisphosphate) + H2O = a 1,2-diacyl-sn-glycero-3-phospho-(1D-myo-inositol-5-phosphate) + phosphate. It carries out the reaction 1,2-dioctanoyl-sn-glycero-3-phospho-(1-D-myo-inositol-3-phosphate) + H2O = 1,2-dioctanoyl-sn-glycero-3-phospho-(1D-myo-inositol) + phosphate. The enzyme catalyses 1,2-dioctanoyl-sn-glycero-3-phospho-(1D-myo-inositol-3,5-bisphosphate) + H2O = 1,2-dioctanoyl-sn-glycero-3-phospho-(1D-myo-inositol-5-phosphate) + phosphate. It catalyses the reaction 1,2-dihexadecanoyl-sn-glycero-3-phospho-(1D-myo-inositol-3,5-phosphate) + H2O = 1,2-dihexadecanoyl-sn-glycero-3-phospho-(1D-myo-inositol-5-phosphate) + phosphate. Allosterically activated by phosphatidylinositol 5-phosphate (PI5P). Its function is as follows. Lipid phosphatase which dephosphorylates phosphatidylinositol 3-monophosphate (PI3P) and phosphatidylinositol 3,5-bisphosphate (PI(3,5)P2). Has also been shown to dephosphorylate phosphotyrosine- and phosphoserine-containing peptides. Negatively regulates EGFR degradation through regulation of EGFR trafficking from the late endosome to the lysosome. Plays a role in vacuolar formation and morphology. Regulates desmin intermediate filament assembly and architecture. Plays a role in mitochondrial morphology and positioning. Required for skeletal muscle maintenance but not for myogenesis. In skeletal muscles, stabilizes MTMR12 protein levels. This chain is Myotubularin, found in Homo sapiens (Human).